Consider the following 540-residue polypeptide: MQYIVVTGGVISGLGKGTITSSIGHILKDSGFKVSSVKIDPYINYDAGTMNPYQHGEVFVLDDGSEVDLDLGNYERFMDINLSWKNNITTGKVYLEVIEKERHGDYLGKTVQIIPHITDEIKRRIRDVATSSKADFVLIEVGGTVGDIESMPFLEAVRQLKREENNVIFAHVTLVPEIGPTEEQKTKPTQHSVKALREIGIQPDIIFARSKNRLLEETKKRISLFTDVPEGGIISVYDVENVYLLPEVMVNEGFISYLSKLSGKEIKYRDSWKAYTENIKHPKDRVKIAIVGKYVDLHDAYISHKEAFSHVTGNTGIAVDIKWLDSEKVKDDQSMLSDVDAILIPGGFGYRGVEGKIAATRFALENHIPFLGICLGFQVAVIEIARDIIGLQNANSTEFDPATKYPVIDILPEQKGIKDLGGTMRLGSKKVLIKDGTLAKRIYGTDTIYERHRHRYEVNPNYISIIEKAGFVFSGTDEDGIRMEILEKKGDESFIATQYHSEFKSRPLNPSRVHLHLVQQALIYKKNKDIGEAVKLRSSV.

Residues 1 to 264 (MQYIVVTGGV…ISYLSKLSGK (264 aa)) are amidoligase domain. S12 provides a ligand contact to CTP. A UTP-binding site is contributed by S12. 13–18 (GLGKGT) is an ATP binding site. Position 53 (Y53) interacts with L-glutamine. D70 serves as a coordination point for ATP. Residues D70 and E140 each coordinate Mg(2+). CTP-binding positions include 147-149 (DIE), 185-190 (KTKPTQ), and R221. Residues 185-190 (KTKPTQ) and R221 each bind UTP. The 234-residue stretch at 294-527 (YVDLHDAYIS…VQQALIYKKN (234 aa)) folds into the Glutamine amidotransferase type-1 domain. G347 contributes to the L-glutamine binding site. The Nucleophile; for glutamine hydrolysis role is filled by C374. L-glutamine contacts are provided by residues 375 to 378 (LGFQ), E398, and R455. Residues H500 and E502 contribute to the active site.

Belongs to the CTP synthase family. As to quaternary structure, homotetramer.

It carries out the reaction UTP + L-glutamine + ATP + H2O = CTP + L-glutamate + ADP + phosphate + 2 H(+). The enzyme catalyses L-glutamine + H2O = L-glutamate + NH4(+). It catalyses the reaction UTP + NH4(+) + ATP = CTP + ADP + phosphate + 2 H(+). It participates in pyrimidine metabolism; CTP biosynthesis via de novo pathway; CTP from UDP: step 2/2. Its activity is regulated as follows. Allosterically activated by GTP, when glutamine is the substrate; GTP has no effect on the reaction when ammonia is the substrate. The allosteric effector GTP functions by stabilizing the protein conformation that binds the tetrahedral intermediate(s) formed during glutamine hydrolysis. Inhibited by the product CTP, via allosteric rather than competitive inhibition. In terms of biological role, catalyzes the ATP-dependent amination of UTP to CTP with either L-glutamine or ammonia as the source of nitrogen. Regulates intracellular CTP levels through interactions with the four ribonucleotide triphosphates. This Thermoplasma volcanium (strain ATCC 51530 / DSM 4299 / JCM 9571 / NBRC 15438 / GSS1) protein is CTP synthase.